The sequence spans 20 residues: Cupiennin-6f (20 aa).

In terms of tissue distribution, expressed by the venom gland.

The protein localises to the secreted. The sequence is that of Cupiennin-6f from Cupiennius salei (American wandering spider).